A 544-amino-acid chain; its full sequence is Chaperonin GroEL (544 aa).

ATP contacts are provided by residues 30 to 33, Lys51, 87 to 91, Gly415, 479 to 481, and Asp495; these read TLGP, DGTTT, and NAA. Over residues 525–537 the composition is skewed to low complexity; sequence PQDTPATAAAPDM. The segment at 525-544 is disordered; sequence PQDTPATAAAPDMGGMGGMM.

Belongs to the chaperonin (HSP60) family. As to quaternary structure, forms a cylinder of 14 subunits composed of two heptameric rings stacked back-to-back. Interacts with the co-chaperonin GroES.

The protein resides in the cytoplasm. The catalysed reaction is ATP + H2O + a folded polypeptide = ADP + phosphate + an unfolded polypeptide.. In terms of biological role, together with its co-chaperonin GroES, plays an essential role in assisting protein folding. The GroEL-GroES system forms a nano-cage that allows encapsulation of the non-native substrate proteins and provides a physical environment optimized to promote and accelerate protein folding. The polypeptide is Chaperonin GroEL (Ruthia magnifica subsp. Calyptogena magnifica).